The chain runs to 60 residues: Acrosin (60 aa).

N-linked (GlcNAc...) asparagine glycosylation is present at asparagine 3. The region spanning 24–60 is the Peptidase S1 domain; sequence IIGGQDAAHGSWPWMVSLQIFTYHNNRRYHVCGGSLL.

The protein belongs to the peptidase S1 family. Heavy chain (catalytic) and a light chain linked by two disulfide bonds. Forms a heterodimer with SERPINA5.

The enzyme catalyses Preferential cleavage: Arg-|-Xaa, Lys-|-Xaa.. Its activity is regulated as follows. Inhibited by SERPINA5. In terms of biological role, acrosin is the major protease of mammalian spermatozoa. It is a serine protease of trypsin-like cleavage specificity, it is synthesized in a zymogen form, proacrosin and stored in the acrosome. In Capra hircus (Goat), this protein is Acrosin (ACR).